Reading from the N-terminus, the 306-residue chain is Aspartate carbamoyltransferase catalytic subunit (306 aa).

Carbamoyl phosphate is bound by residues R53 and T54. L-aspartate is bound at residue K82. Residues R103, H131, and Q134 each contribute to the carbamoyl phosphate site. R164 and R226 together coordinate L-aspartate. The carbamoyl phosphate site is built by L263 and P264.

Belongs to the aspartate/ornithine carbamoyltransferase superfamily. ATCase family. As to quaternary structure, heterododecamer (2C3:3R2) of six catalytic PyrB chains organized as two trimers (C3), and six regulatory PyrI chains organized as three dimers (R2).

It catalyses the reaction carbamoyl phosphate + L-aspartate = N-carbamoyl-L-aspartate + phosphate + H(+). The protein operates within pyrimidine metabolism; UMP biosynthesis via de novo pathway; (S)-dihydroorotate from bicarbonate: step 2/3. In terms of biological role, catalyzes the condensation of carbamoyl phosphate and aspartate to form carbamoyl aspartate and inorganic phosphate, the committed step in the de novo pyrimidine nucleotide biosynthesis pathway. This chain is Aspartate carbamoyltransferase catalytic subunit, found in Methanocaldococcus jannaschii (strain ATCC 43067 / DSM 2661 / JAL-1 / JCM 10045 / NBRC 100440) (Methanococcus jannaschii).